Reading from the N-terminus, the 88-residue chain is Acyl carrier protein (88 aa).

A Carrier domain is found at 4–79 (DSVPAKVMEI…AAVDYIQNKM (76 aa)). S39 is modified (O-(pantetheine 4'-phosphoryl)serine).

Belongs to the acyl carrier protein (ACP) family. Post-translationally, 4'-phosphopantetheine is transferred from CoA to a specific serine of apo-ACP by AcpS. This modification is essential for activity because fatty acids are bound in thioester linkage to the sulfhydryl of the prosthetic group.

It localises to the cytoplasm. It functions in the pathway lipid metabolism; fatty acid biosynthesis. Its function is as follows. Carrier of the growing fatty acid chain in fatty acid biosynthesis. The protein is Acyl carrier protein of Trichodesmium erythraeum (strain IMS101).